The primary structure comprises 244 residues: ATP synthase subunit a (244 aa).

Helical transmembrane passes span L17–T37, F75–P95, D112–V132, L164–L184, F196–F216, and S217–S237.

Belongs to the ATPase A chain family. F-type ATPases have 2 components, CF(1) - the catalytic core - and CF(0) - the membrane proton channel. CF(1) has five subunits: alpha(3), beta(3), gamma(1), delta(1), epsilon(1). CF(0) has three main subunits: a(1), b(2) and c(9-12). The alpha and beta chains form an alternating ring which encloses part of the gamma chain. CF(1) is attached to CF(0) by a central stalk formed by the gamma and epsilon chains, while a peripheral stalk is formed by the delta and b chains.

The protein localises to the cell membrane. Its function is as follows. Key component of the proton channel; it plays a direct role in the translocation of protons across the membrane. The chain is ATP synthase subunit a from Bacillus velezensis (strain DSM 23117 / BGSC 10A6 / LMG 26770 / FZB42) (Bacillus amyloliquefaciens subsp. plantarum).